A 256-amino-acid polypeptide reads, in one-letter code: Acetylglutamate kinase (256 aa).

Substrate is bound by residues 40-41, arginine 62, and asparagine 153; that span reads GG.

Belongs to the acetylglutamate kinase family. ArgB subfamily.

Its subcellular location is the cytoplasm. It catalyses the reaction N-acetyl-L-glutamate + ATP = N-acetyl-L-glutamyl 5-phosphate + ADP. It functions in the pathway amino-acid biosynthesis; L-arginine biosynthesis; N(2)-acetyl-L-ornithine from L-glutamate: step 2/4. Its function is as follows. Catalyzes the ATP-dependent phosphorylation of N-acetyl-L-glutamate. The chain is Acetylglutamate kinase from Bacillus cytotoxicus (strain DSM 22905 / CIP 110041 / 391-98 / NVH 391-98).